The primary structure comprises 309 residues: Ribosomal RNA large subunit methyltransferase F (309 aa).

A disordered region spans residues 1 to 21 (MASQHDKKSVQSGLLHPRNPH).

This sequence belongs to the methyltransferase superfamily. METTL16/RlmF family.

It is found in the cytoplasm. The catalysed reaction is adenosine(1618) in 23S rRNA + S-adenosyl-L-methionine = N(6)-methyladenosine(1618) in 23S rRNA + S-adenosyl-L-homocysteine + H(+). Specifically methylates the adenine in position 1618 of 23S rRNA. In Desulfotalea psychrophila (strain LSv54 / DSM 12343), this protein is Ribosomal RNA large subunit methyltransferase F.